Consider the following 205-residue polypeptide: Imidazole glycerol phosphate synthase subunit HisH (205 aa).

One can recognise a Glutamine amidotransferase type-1 domain in the interval 1–205 (MIALVDYGGG…FFKMALGDKK (205 aa)). Catalysis depends on Cys79, which acts as the Nucleophile. Residues His181 and Glu183 contribute to the active site.

In terms of assembly, heterodimer of HisH and HisF.

Its subcellular location is the cytoplasm. It catalyses the reaction 5-[(5-phospho-1-deoxy-D-ribulos-1-ylimino)methylamino]-1-(5-phospho-beta-D-ribosyl)imidazole-4-carboxamide + L-glutamine = D-erythro-1-(imidazol-4-yl)glycerol 3-phosphate + 5-amino-1-(5-phospho-beta-D-ribosyl)imidazole-4-carboxamide + L-glutamate + H(+). The enzyme catalyses L-glutamine + H2O = L-glutamate + NH4(+). Its pathway is amino-acid biosynthesis; L-histidine biosynthesis; L-histidine from 5-phospho-alpha-D-ribose 1-diphosphate: step 5/9. IGPS catalyzes the conversion of PRFAR and glutamine to IGP, AICAR and glutamate. The HisH subunit catalyzes the hydrolysis of glutamine to glutamate and ammonia as part of the synthesis of IGP and AICAR. The resulting ammonia molecule is channeled to the active site of HisF. In Dehalococcoides mccartyi (strain ATCC BAA-2266 / KCTC 15142 / 195) (Dehalococcoides ethenogenes (strain 195)), this protein is Imidazole glycerol phosphate synthase subunit HisH.